Consider the following 244-residue polypeptide: uncharacterized protein (244 aa).

The first 19 residues, 1-19, serve as a signal peptide directing secretion; sequence MRGIFFLILILNFIGLIFS. 2 N-linked (GlcNAc...) asparagine glycosylation sites follow: asparagine 45 and asparagine 77. ShKT domains lie at 67-105 and 113-149; these read CNNP…CGKC and CSDK…CNRC. 3 disulfide bridges follow: cysteine 113-cysteine 149, cysteine 122-cysteine 142, and cysteine 129-cysteine 146. Asparagine 152 and asparagine 158 each carry an N-linked (GlcNAc...) asparagine glycan. ShKT domains are found at residues 171–205 and 208–243; these read CTDL…CNAC and CEDA…CNIC. Intrachain disulfides connect cysteine 171–cysteine 205, cysteine 178–cysteine 198, cysteine 185–cysteine 202, cysteine 208–cysteine 243, cysteine 215–cysteine 236, and cysteine 224–cysteine 240.

This is an uncharacterized protein from Caenorhabditis elegans.